Consider the following 458-residue polypeptide: A-type ATP synthase subunit B (458 aa).

Belongs to the ATPase alpha/beta chains family. Has multiple subunits with at least A(3), B(3), C, D, E, F, H, I and proteolipid K(x).

It localises to the cell membrane. Component of the A-type ATP synthase that produces ATP from ADP in the presence of a proton gradient across the membrane. The B chain is a regulatory subunit. The sequence is that of A-type ATP synthase subunit B from Methanocorpusculum labreanum (strain ATCC 43576 / DSM 4855 / Z).